The following is a 280-amino-acid chain: Band 7 protein AGAP004871 (280 aa).

The chain crosses the membrane as a helical span at residues 23–43; it reads ILIFLSWVLVVLTMPFSLLVC.

This sequence belongs to the band 7/mec-2 family.

The protein resides in the membrane. The sequence is that of Band 7 protein AGAP004871 from Anopheles gambiae (African malaria mosquito).